A 540-amino-acid chain; its full sequence is Glucose-6-phosphate isomerase (540 aa).

The Proton donor role is filled by E350. Catalysis depends on residues H381 and K503.

It belongs to the GPI family.

Its subcellular location is the cytoplasm. It catalyses the reaction alpha-D-glucose 6-phosphate = beta-D-fructose 6-phosphate. Its pathway is carbohydrate biosynthesis; gluconeogenesis. The protein operates within carbohydrate degradation; glycolysis; D-glyceraldehyde 3-phosphate and glycerone phosphate from D-glucose: step 2/4. Functionally, catalyzes the reversible isomerization of glucose-6-phosphate to fructose-6-phosphate. The chain is Glucose-6-phosphate isomerase from Burkholderia pseudomallei (strain 1106a).